A 652-amino-acid chain; its full sequence is Meiotic sister-chromatid recombination protein 3 (652 aa).

4 disordered regions span residues 123–151 (RTGT…SRTG), 304–406 (NNSK…SDQK), 470–576 (EQIQ…ESGA), and 594–652 (ATPV…INTK). Residues 125–141 (GTASSRGVGSRTGSMTG) are compositionally biased toward polar residues. A compositionally biased stretch (low complexity) spans 316-336 (VQKQGVQQQQEVQHQGISQVQ). Over residues 337–361 (NTEAKSVGRKSTMSKRMTLRDTPNA) the composition is skewed to polar residues. Residues 380-390 (TKRKSIFKSKK) are compositionally biased toward basic residues. Composition is skewed to polar residues over residues 506–517 (QFSQENSGNQPP) and 524–544 (QYSQ…NFDT). A compositionally biased stretch (low complexity) spans 545–569 (NASGHNINHNNNNHNNNNNTSSSSS). The span at 612–621 (SSPSIDNTPR) shows a compositional bias: polar residues. A compositionally biased stretch (basic residues) spans 640–652 (RLFKSNKTHINTK).

The protein localises to the cell membrane. May be involved in the control of meiotic sister-chromatid recombination. This is Meiotic sister-chromatid recombination protein 3 (MSC3) from Kluyveromyces lactis (strain ATCC 8585 / CBS 2359 / DSM 70799 / NBRC 1267 / NRRL Y-1140 / WM37) (Yeast).